The following is a 96-amino-acid chain: uncharacterized protein (96 aa).

Residues 1 to 23 form the signal peptide; that stretch reads MKQFYSVVLTIIIYISSQSNVVS. 3 disulfides stabilise this stretch: Cys-60-Cys-74, Cys-67-Cys-78, and Cys-73-Cys-83.

Its subcellular location is the secreted. This is an uncharacterized protein from Schistosoma japonicum (Blood fluke).